Here is a 368-residue protein sequence, read N- to C-terminus: Transcription factor TGA1 (368 aa).

A compositionally biased stretch (polar residues) spans 53-65; sequence LDNNVSEDTSHGT. A disordered region spans residues 53–83; that stretch reads LDNNVSEDTSHGTAGTPHMFDQEASTSRHPD. A bZIP domain is found at 82–145; that stretch reads PDKIQRRLAQ…NGIDTNSLGF (64 aa). Coiled-coil stretches lie at residues 83–131 and 261–281; these read DKIQ…RQQG and NLKQ…EKLQ. Residues 84-104 are basic motif; that stretch reads KIQRRLAQNREAARKSRLRKK. Residues 110 to 124 form a leucine-zipper region; the sequence is LETSRLKLIQLEQEL. In terms of domain architecture, DOG1 spans 153-363; the sequence is IAAFEMEYGH…RALSSSWATR (211 aa). An intrachain disulfide couples Cys260 to Cys266.

This sequence belongs to the bZIP family. Binds DNA as a dimer. The reduced form interacts with NPR1. Predominantly expressed in roots.

It localises to the nucleus. Its function is as follows. Transcriptional activator that binds specifically to the DNA sequence 5'-TGACG-3'. Recognizes ocs elements like the as-1 motif of the cauliflower mosaic virus 35S promoter. Binding to the as-1-like cis elements mediate auxin- and salicylic acid-inducible transcription. May be involved in the induction of the systemic acquired resistance (SAR) via its interaction with NPR1. Could also bind to the Hex-motif (5'-TGACGTGG-3') another cis-acting element found in plant histone promoters. This Arabidopsis thaliana (Mouse-ear cress) protein is Transcription factor TGA1 (TGA1).